A 264-amino-acid chain; its full sequence is uncharacterized protein (264 aa).

An ATP-binding site is contributed by Lys-15–Thr-22.

Belongs to the ParA family. MinD subfamily.

This is an uncharacterized protein from Methanocaldococcus jannaschii (strain ATCC 43067 / DSM 2661 / JAL-1 / JCM 10045 / NBRC 100440) (Methanococcus jannaschii).